The following is a 504-amino-acid chain: D-alanine--D-alanyl carrier protein ligase (504 aa).

Residue 152 to 153 coordinates ATP; it reads TS. D-alanine is bound at residue D197. ATP is bound at residue 292-297; the sequence is NTYGPT. Residue V301 coordinates D-alanine. ATP is bound by residues D383, 394-397, and K492; that span reads YNGR. Residue K492 coordinates D-alanine.

This sequence belongs to the ATP-dependent AMP-binding enzyme family. DltA subfamily.

Its subcellular location is the cytoplasm. It catalyses the reaction holo-[D-alanyl-carrier protein] + D-alanine + ATP = D-alanyl-[D-alanyl-carrier protein] + AMP + diphosphate. It functions in the pathway cell wall biogenesis; lipoteichoic acid biosynthesis. Functionally, catalyzes the first step in the D-alanylation of lipoteichoic acid (LTA), the activation of D-alanine and its transfer onto the D-alanyl carrier protein (Dcp) DltC. In an ATP-dependent two-step reaction, forms a high energy D-alanyl-AMP intermediate, followed by transfer of the D-alanyl residue as a thiol ester to the phosphopantheinyl prosthetic group of the Dcp. D-alanylation of LTA plays an important role in modulating the properties of the cell wall in Gram-positive bacteria, influencing the net charge of the cell wall. The chain is D-alanine--D-alanyl carrier protein ligase from Bacillus mycoides (strain KBAB4) (Bacillus weihenstephanensis).